The primary structure comprises 421 residues: Signal recognition particle receptor FtsY (421 aa).

Residues 1-10 (MFSFFRRKKK) show a composition bias toward basic residues. Residues 1–31 (MFSFFRRKKKQETPALEEAQIQETAAKAESE) are disordered. GTP-binding positions include 228-235 (GINGAGKT), 309-313 (DTAGR), and 373-376 (TKLD).

This sequence belongs to the GTP-binding SRP family. FtsY subfamily. Part of the signal recognition particle protein translocation system, which is composed of SRP and FtsY. SRP is a ribonucleoprotein composed of Ffh and a 4.5S RNA molecule.

The protein localises to the cell inner membrane. The protein resides in the cytoplasm. It carries out the reaction GTP + H2O = GDP + phosphate + H(+). Involved in targeting and insertion of nascent membrane proteins into the cytoplasmic membrane. Acts as a receptor for the complex formed by the signal recognition particle (SRP) and the ribosome-nascent chain (RNC). Interaction with SRP-RNC leads to the transfer of the RNC complex to the Sec translocase for insertion into the membrane, the hydrolysis of GTP by both Ffh and FtsY, and the dissociation of the SRP-FtsY complex into the individual components. This chain is Signal recognition particle receptor FtsY, found in Neisseria meningitidis serogroup A / serotype 4A (strain DSM 15465 / Z2491).